The primary structure comprises 277 residues: MALRFYKAYTPGTRNRSVADCSGLTKTRPEKSLTRSMHRAKGRNNRGVITCRHRGGGHKRLYRQIDFRRNKYDMAATVKTIEYDPNRNARIALVEYQDGEKRYILHPNGLEIGDSIIASETAVNAVGNSLPLMAMPLGVQVHNIEMHPKKGGQLVRSAGAVAQLVAKEGEYVTLRLPSGEVRLISNKCWATIGQVGNMEAMNLSLGKAGRSRWLGRRPTVRGSVMNAVDHPHGGGEGRCPVGHAQPRTPWGKPALGVKTRTRKKYSDTLILRRRKVS.

Residues 228–254 (VDHPHGGGEGRCPVGHAQPRTPWGKPA) form a disordered region.

It belongs to the universal ribosomal protein uL2 family. As to quaternary structure, part of the 50S ribosomal subunit.

The protein localises to the plastid. Its subcellular location is the chloroplast. The protein is Large ribosomal subunit protein uL2c (rpl2) of Ostreococcus tauri.